Consider the following 177-residue polypeptide: Large ribosomal subunit protein uL6 (177 aa).

It belongs to the universal ribosomal protein uL6 family. As to quaternary structure, part of the 50S ribosomal subunit.

Its function is as follows. This protein binds to the 23S rRNA, and is important in its secondary structure. It is located near the subunit interface in the base of the L7/L12 stalk, and near the tRNA binding site of the peptidyltransferase center. The sequence is that of Large ribosomal subunit protein uL6 from Pasteurella multocida (strain Pm70).